The following is a 156-amino-acid chain: Small ribosomal subunit protein uS7 (156 aa).

Belongs to the universal ribosomal protein uS7 family. Part of the 30S ribosomal subunit. Contacts proteins S9 and S11.

Functionally, one of the primary rRNA binding proteins, it binds directly to 16S rRNA where it nucleates assembly of the head domain of the 30S subunit. Is located at the subunit interface close to the decoding center, probably blocks exit of the E-site tRNA. The chain is Small ribosomal subunit protein uS7 from Brucella anthropi (strain ATCC 49188 / DSM 6882 / CCUG 24695 / JCM 21032 / LMG 3331 / NBRC 15819 / NCTC 12168 / Alc 37) (Ochrobactrum anthropi).